The primary structure comprises 342 residues: Ribosomal RNA small subunit methyltransferase H (342 aa).

Residues 62–64, Asp82, Phe108, Asp129, and Gln136 each bind S-adenosyl-L-methionine; that span reads GGH. Positions 280-319 are disordered; sequence RHSKGQYPEDENLPMPPKRPRYFSKPKRVGPSKAEISHNP. Residues 297–309 are compositionally biased toward basic residues; sequence KRPRYFSKPKRVG.

Belongs to the methyltransferase superfamily. RsmH family.

The protein resides in the cytoplasm. It catalyses the reaction cytidine(1402) in 16S rRNA + S-adenosyl-L-methionine = N(4)-methylcytidine(1402) in 16S rRNA + S-adenosyl-L-homocysteine + H(+). Its function is as follows. Specifically methylates the N4 position of cytidine in position 1402 (C1402) of 16S rRNA. In Psychrobacter cryohalolentis (strain ATCC BAA-1226 / DSM 17306 / VKM B-2378 / K5), this protein is Ribosomal RNA small subunit methyltransferase H.